A 136-amino-acid chain; its full sequence is Nucleoside diphosphate kinase (136 aa).

ATP contacts are provided by K10, F58, R86, T92, R104, and N114. H117 serves as the catalytic Pros-phosphohistidine intermediate.

This sequence belongs to the NDK family. Homotetramer. It depends on Mg(2+) as a cofactor.

It localises to the cytoplasm. The enzyme catalyses a 2'-deoxyribonucleoside 5'-diphosphate + ATP = a 2'-deoxyribonucleoside 5'-triphosphate + ADP. The catalysed reaction is a ribonucleoside 5'-diphosphate + ATP = a ribonucleoside 5'-triphosphate + ADP. Functionally, major role in the synthesis of nucleoside triphosphates other than ATP. The ATP gamma phosphate is transferred to the NDP beta phosphate via a ping-pong mechanism, using a phosphorylated active-site intermediate. This chain is Nucleoside diphosphate kinase, found in Corynebacterium glutamicum (strain R).